A 622-amino-acid chain; its full sequence is Chaperone protein HscA homolog (622 aa).

This sequence belongs to the heat shock protein 70 family.

Chaperone involved in the maturation of iron-sulfur cluster-containing proteins. Has a low intrinsic ATPase activity which is markedly stimulated by HscB. The sequence is that of Chaperone protein HscA homolog from Verminephrobacter eiseniae (strain EF01-2).